The chain runs to 407 residues: Imidazolonepropionase (407 aa).

Residues histidine 68 and histidine 70 each coordinate Fe(3+). Residues histidine 68 and histidine 70 each coordinate Zn(2+). 3 residues coordinate 4-imidazolone-5-propanoate: arginine 77, tyrosine 140, and histidine 173. Tyrosine 140 serves as a coordination point for N-formimidoyl-L-glutamate. Residue histidine 238 participates in Fe(3+) binding. Histidine 238 is a binding site for Zn(2+). Glutamine 241 contacts 4-imidazolone-5-propanoate. Aspartate 313 lines the Fe(3+) pocket. Aspartate 313 provides a ligand contact to Zn(2+). N-formimidoyl-L-glutamate-binding residues include asparagine 315 and glycine 317. Position 318 (threonine 318) interacts with 4-imidazolone-5-propanoate.

Belongs to the metallo-dependent hydrolases superfamily. HutI family. Zn(2+) serves as cofactor. The cofactor is Fe(3+).

Its subcellular location is the cytoplasm. It catalyses the reaction 4-imidazolone-5-propanoate + H2O = N-formimidoyl-L-glutamate. Its pathway is amino-acid degradation; L-histidine degradation into L-glutamate; N-formimidoyl-L-glutamate from L-histidine: step 3/3. Catalyzes the hydrolytic cleavage of the carbon-nitrogen bond in imidazolone-5-propanoate to yield N-formimidoyl-L-glutamate. It is the third step in the universal histidine degradation pathway. The sequence is that of Imidazolonepropionase from Burkholderia cenocepacia (strain HI2424).